Here is a 162-residue protein sequence, read N- to C-terminus: Shikimate kinase (162 aa).

Residue Gly10–Thr15 coordinates ATP. Ser14 provides a ligand contact to Mg(2+). Substrate is bound by residues Asp28, Arg52, and Gly73. Position 113 (Arg113) interacts with ATP. Arg129 lines the substrate pocket.

The protein belongs to the shikimate kinase family. As to quaternary structure, monomer. Mg(2+) is required as a cofactor.

It is found in the cytoplasm. It catalyses the reaction shikimate + ATP = 3-phosphoshikimate + ADP + H(+). It functions in the pathway metabolic intermediate biosynthesis; chorismate biosynthesis; chorismate from D-erythrose 4-phosphate and phosphoenolpyruvate: step 5/7. In terms of biological role, catalyzes the specific phosphorylation of the 3-hydroxyl group of shikimic acid using ATP as a cosubstrate. This Lactococcus lactis subsp. cremoris (strain MG1363) protein is Shikimate kinase.